Consider the following 353-residue polypeptide: Guanine nucleotide-binding protein subunit alpha (353 aa).

Gly-2 is lipidated: N-myristoyl glycine. Cys-3 is lipidated: S-palmitoyl cysteine. Positions 32–353 constitute a G-alpha domain; that stretch reads NEIKMLLLGA…QENLRLCGLI (322 aa). The tract at residues 35–48 is G1 motif; sequence KMLLLGAGESGKST. Glu-43, Ser-44, Gly-45, Lys-46, Ser-47, Thr-48, Asp-150, Leu-175, Thr-181, Gly-203, Asn-269, Lys-270, Asp-272, and Ala-325 together coordinate GTP. Ser-47 lines the Mg(2+) pocket. The interval 173-181 is G2 motif; it reads DVLRSRVKT. Thr-181 lines the Mg(2+) pocket. Residues 196–205 are G3 motif; sequence YRMFDVGGQR. The interval 265 to 272 is G4 motif; the sequence is ILFLNKID. The segment at 323–328 is G5 motif; the sequence is TCATDT.

Belongs to the G-alpha family. G(q) subfamily. In terms of assembly, g proteins are composed of 3 units; alpha, beta and gamma. The alpha chain contains the guanine nucleotide binding site. Mg(2+) serves as cofactor.

Its function is as follows. Guanine nucleotide-binding proteins (G proteins) are involved as modulators or transducers in various transmembrane signaling systems. Involved in the mating pathway. The protein is Guanine nucleotide-binding protein subunit alpha (CGA1) of Cochliobolus heterostrophus (strain C4 / ATCC 48331 / race T) (Southern corn leaf blight fungus).